A 302-amino-acid polypeptide reads, in one-letter code: Putative gluconeogenesis factor (302 aa).

Belongs to the gluconeogenesis factor family.

It localises to the cytoplasm. In terms of biological role, required for morphogenesis under gluconeogenic growth conditions. This is Putative gluconeogenesis factor (ybhK) from Escherichia coli O157:H7.